We begin with the raw amino-acid sequence, 395 residues long: Probable G-protein coupled receptor npr-29 (395 aa).

4 helical membrane-spanning segments follow: residues 38 to 58, 66 to 86, 89 to 109, and 148 to 168; these read VVGF…LFAP, ILFY…AMLL, IELV…YLIF, and AIIQ…PVFA. A glycan (N-linked (GlcNAc...) asparagine) is linked at Asn180. 3 consecutive transmembrane segments (helical) span residues 202-222, 252-272, and 287-307; these read FWFN…GIIY, VITT…PYWV, and IIII…AYPL.

It belongs to the G-protein coupled receptor 1 family.

The protein localises to the cell membrane. Its function is as follows. Not known. Putative receptor. This chain is Probable G-protein coupled receptor npr-29, found in Caenorhabditis elegans.